The following is a 422-amino-acid chain: Beclin-1-like protein (422 aa).

A coiled-coil region spans residues 119–243 (MLEIMDRELR…KQQLDKLRDT (125 aa)). The disordered stretch occupies residues 182–201 (QSLNDAIAEEEQEREELHEQ).

This sequence belongs to the beclin family. As to quaternary structure, interacts with Rab18, preferentially binding to the GTP-bound form.

Its function is as follows. Plays a central role in autophagy. This Drosophila melanogaster (Fruit fly) protein is Beclin-1-like protein.